Here is an 82-residue protein sequence, read N- to C-terminus: Defensin-like protein 22 (82 aa).

A signal peptide spans 1-24 (MAGLKVFSFALLLILTFSLIDVEG). Cystine bridges form between Cys34–Cys82, Cys44–Cys69, Cys53–Cys78, and Cys57–Cys80.

It belongs to the DEFL family.

The protein resides in the secreted. This Arabidopsis thaliana (Mouse-ear cress) protein is Defensin-like protein 22.